Reading from the N-terminus, the 78-residue chain is D-alanyl carrier protein (78 aa).

A Carrier domain is found at 1–78 (MEFKEQVLDL…KIVEALEELR (78 aa)). The residue at position 36 (Ser36) is an O-(pantetheine 4'-phosphoryl)serine.

The protein belongs to the DltC family. 4'-phosphopantetheine is transferred from CoA to a specific serine of apo-DCP.

It is found in the cytoplasm. The protein operates within cell wall biogenesis; lipoteichoic acid biosynthesis. Carrier protein involved in the D-alanylation of lipoteichoic acid (LTA). The loading of thioester-linked D-alanine onto DltC is catalyzed by D-alanine--D-alanyl carrier protein ligase DltA. The DltC-carried D-alanyl group is further transferred to cell membrane phosphatidylglycerol (PG) by forming an ester bond, probably catalyzed by DltD. D-alanylation of LTA plays an important role in modulating the properties of the cell wall in Gram-positive bacteria, influencing the net charge of the cell wall. This is D-alanyl carrier protein from Staphylococcus haemolyticus (strain JCSC1435).